The sequence spans 285 residues: NAC domain-containing protein 92 (285 aa).

One can recognise an NAC domain in the interval 20-170 (LPPGFRFHPT…EWVICRVFQK (151 aa)). The DNA-binding element occupies 117 to 176 (VGMKKTLVFYKGRAPKGVKTNWVMHEYRLEGKYCIENLPQTAKNEWVICRVFQKRADGTK).

As to quaternary structure, forms homodimers. Interacts with GLK1 and GLK2. Interacts with NLA. Post-translationally, ubiquitinated by NLA. Ubiquitination of NAC92 leads to its degradation by the proteasome during leaf senescence under nitrogen deficiency. In terms of tissue distribution, mostly expressed in roots and flowers, and, to a lower extent, in shoots and leaves. Particularly expressed in old and senescing tissues.

The protein localises to the nucleus. Functionally, transcription activator that binds to DNA in promoters of target genes on a specific bipartite motif 5'-[ACG][CA]GT[AG](5-6n)[CT]AC[AG]-3'. Promotes lateral root development. Triggers the expression of senescence-associated genes during age-, salt- and dark-induced senescence through a regulatory network that may involve cross-talk with salt- and H(2)O(2)-dependent signaling pathways. Also regulates genes during seed germination. Positively regulates aging-induced cell death. Involved in age-related resistance (ARR) against Pseudomonas syringae pv. tomato and Hyaloperonospora arabidopsidis. Antagonizes GLK1 and GLK2 transcriptional activity, shifting the balance from chloroplast maintenance towards deterioration during leaf senescence. Promotes the expression of senescence-associated genes, including ENDO1/BFN1, SWEET15/SAG29 and SINA1/At3g13672, during senescence onset. This is NAC domain-containing protein 92 from Arabidopsis thaliana (Mouse-ear cress).